The chain runs to 735 residues: F-box and leucine-rich repeat protein 13 (735 aa).

An F-box domain is found at 152-198; sequence KCDISLLPERAILQIFFYLSLKDVIICGQVNHAWMLMTQLNSLWNAI. LRR repeat units follow at residues 230-254, 255-280, 281-305, 306-333, 334-359, 360-385, 386-406, 410-435, 436-460, 461-488, 489-514, 515-538, 539-563, 564-589, 590-615, 616-641, and 642-667; these read GCLL…NVSD, CPTF…NLSN, TTIT…SLAY, CRRF…DLSG, CTQI…TIND, MPTL…VFTG, APHI…RKIR, NKRV…YMAD, CKGI…NLAN, CVRI…NLSN, CVRL…SLRN, CEHL…IDLS, GTDI…SVSE, CYRI…DVSY, CSQL…SIAG, CPKI…DISG, and CVLL…KMQY. Residues 682–692 are compositionally biased toward polar residues; that stretch reads KVQQQEYNTND. The disordered stretch occupies residues 682–703; the sequence is KVQQQEYNTNDPPRWFGYDREG.

It belongs to the DRC6 family. Component of the nexin-dynein regulatory complex (N-DRC). Directly interacts with SKP1 and CUL1. Interacts with TCTE1/DRC5.

Its subcellular location is the cytoplasm. It is found in the cytoskeleton. The protein localises to the flagellum axoneme. The protein resides in the microtubule organizing center. It localises to the centrosome. Functionally, substrate-recognition component of the SCF (SKP1-CUL1-F-box protein)-type E3 ubiquitin ligase complex. Component of the nexin-dynein regulatory complex (N-DRC), a key regulator of ciliary/flagellar motility which maintains the alignment and integrity of the distal axoneme and regulates microtubule sliding in motile axonemes. Specifically targets CEP192 isoform 3 for ubiquitin-mediated proteolysis and thereby acts as a regulator of microtubule nucleation activity. The protein is F-box and leucine-rich repeat protein 13 (FBXL13) of Homo sapiens (Human).